The chain runs to 449 residues: UDP-N-acetylmuramoylalanine--D-glutamate ligase (449 aa).

An ATP-binding site is contributed by 111–117 (GTNGKST).

Belongs to the MurCDEF family.

It localises to the cytoplasm. It catalyses the reaction UDP-N-acetyl-alpha-D-muramoyl-L-alanine + D-glutamate + ATP = UDP-N-acetyl-alpha-D-muramoyl-L-alanyl-D-glutamate + ADP + phosphate + H(+). It participates in cell wall biogenesis; peptidoglycan biosynthesis. Its function is as follows. Cell wall formation. Catalyzes the addition of glutamate to the nucleotide precursor UDP-N-acetylmuramoyl-L-alanine (UMA). The polypeptide is UDP-N-acetylmuramoylalanine--D-glutamate ligase (Rickettsia felis (strain ATCC VR-1525 / URRWXCal2) (Rickettsia azadi)).